A 248-amino-acid polypeptide reads, in one-letter code: 3-oxoacyl-[acyl-carrier-protein] reductase FabG (248 aa).

Residues G14 to R17, D64 to V65, and N91 contribute to the NADP(+) site. Residue S143 participates in substrate binding. Residue Y156 is the Proton acceptor of the active site. NADP(+) is bound by residues Y156–K160 and I189.

This sequence belongs to the short-chain dehydrogenases/reductases (SDR) family. Homotetramer.

It catalyses the reaction a (3R)-hydroxyacyl-[ACP] + NADP(+) = a 3-oxoacyl-[ACP] + NADPH + H(+). Its pathway is lipid metabolism; fatty acid biosynthesis. Functionally, catalyzes the NADPH-dependent reduction of beta-ketoacyl-ACP substrates to beta-hydroxyacyl-ACP products, the first reductive step in the elongation cycle of fatty acid biosynthesis. This is 3-oxoacyl-[acyl-carrier-protein] reductase FabG (fabG) from Chlamydia pneumoniae (Chlamydophila pneumoniae).